Consider the following 143-residue polypeptide: 3-dehydroquinate dehydratase (143 aa).

The active-site Proton acceptor is the Tyr-22. 3 residues coordinate substrate: Asn-73, His-79, and Asp-86. The active-site Proton donor is His-99. Substrate is bound by residues 100 to 101 (IS) and Arg-110.

This sequence belongs to the type-II 3-dehydroquinase family. Homododecamer.

The enzyme catalyses 3-dehydroquinate = 3-dehydroshikimate + H2O. It functions in the pathway metabolic intermediate biosynthesis; chorismate biosynthesis; chorismate from D-erythrose 4-phosphate and phosphoenolpyruvate: step 3/7. In terms of biological role, catalyzes a trans-dehydration via an enolate intermediate. The polypeptide is 3-dehydroquinate dehydratase (Salinispora arenicola (strain CNS-205)).